Reading from the N-terminus, the 194-residue chain is Crossover junction endodeoxyribonuclease RuvC (194 aa).

Active-site residues include Asp7, Glu68, and Asp141. Residues Asp7, Glu68, and Asp141 each coordinate Mg(2+).

Belongs to the RuvC family. Homodimer which binds Holliday junction (HJ) DNA. The HJ becomes 2-fold symmetrical on binding to RuvC with unstacked arms; it has a different conformation from HJ DNA in complex with RuvA. In the full resolvosome a probable DNA-RuvA(4)-RuvB(12)-RuvC(2) complex forms which resolves the HJ. Requires Mg(2+) as cofactor.

The protein localises to the cytoplasm. It catalyses the reaction Endonucleolytic cleavage at a junction such as a reciprocal single-stranded crossover between two homologous DNA duplexes (Holliday junction).. In terms of biological role, the RuvA-RuvB-RuvC complex processes Holliday junction (HJ) DNA during genetic recombination and DNA repair. Endonuclease that resolves HJ intermediates. Cleaves cruciform DNA by making single-stranded nicks across the HJ at symmetrical positions within the homologous arms, yielding a 5'-phosphate and a 3'-hydroxyl group; requires a central core of homology in the junction. The consensus cleavage sequence is 5'-(A/T)TT(C/G)-3'. Cleavage occurs on the 3'-side of the TT dinucleotide at the point of strand exchange. HJ branch migration catalyzed by RuvA-RuvB allows RuvC to scan DNA until it finds its consensus sequence, where it cleaves and resolves the cruciform DNA. This Mycolicibacterium vanbaalenii (strain DSM 7251 / JCM 13017 / BCRC 16820 / KCTC 9966 / NRRL B-24157 / PYR-1) (Mycobacterium vanbaalenii) protein is Crossover junction endodeoxyribonuclease RuvC.